Here is a 231-residue protein sequence, read N- to C-terminus: MAKLSKRVKAFKAKVDRTKAYPFDNALALIKECASAKFNESIDVSVQLGVDAKKSDQVVRGSVVLPAGTGKDVRVAVFATGEKAEQAKAAGADIVGMEDLAESIKAGNMPFDIVIASPDTMRIVGTLGQILGPRGMMPNPKVGTVTPDVATAVKNAKAGQVQYRTDKAGIIHATIGRKSFTDEALKSNLLALIDALTKAKPATSKGVYLRKVSLSSTMGAGVRIDQTTLAA.

It belongs to the universal ribosomal protein uL1 family. Part of the 50S ribosomal subunit.

Functionally, binds directly to 23S rRNA. The L1 stalk is quite mobile in the ribosome, and is involved in E site tRNA release. In terms of biological role, protein L1 is also a translational repressor protein, it controls the translation of the L11 operon by binding to its mRNA. The protein is Large ribosomal subunit protein uL1 of Herminiimonas arsenicoxydans.